We begin with the raw amino-acid sequence, 676 residues long: Probable metal-nicotianamine transporter YSL6 (676 aa).

13 consecutive transmembrane segments (helical) span residues 38 to 58 (ITIR…IITH), 62 to 82 (LTVG…FFFV), 110 to 130 (CVVA…LIAM), 154 to 174 (GLWW…FSLV), 276 to 296 (IVNC…WPFV), 321 to 341 (VFIA…KIIA), 392 to 412 (FAIA…PIIF), 413 to 433 (PPLK…LAFC), 452 to 472 (IGLF…AGLA), 510 to 530 (VGTA…WTAF), 561 to 581 (LPKH…IVNL), 604 to 624 (FYIG…LFVW), and 639 to 659 (VASG…ILSI).

Belongs to the YSL (TC 2.A.67.2) family.

The protein localises to the membrane. May be involved in the transport of nicotianamine-chelated metals. The polypeptide is Probable metal-nicotianamine transporter YSL6 (YSL6) (Arabidopsis thaliana (Mouse-ear cress)).